Reading from the N-terminus, the 190-residue chain is Cilia- and flagella-associated protein 20 (190 aa).

The protein belongs to the CFAP20 family.

Its subcellular location is the cytoplasm. The protein resides in the cytoskeleton. It is found in the flagellum axoneme. It localises to the flagellum basal body. Functionally, cilium- and flagellum-specific protein that plays a role in axonemal structure organization and motility. Involved in the control of flagellar beating in an asymmetric and planar waveform. Stabilizes outer doublet microtubules (DMTs) of the axoneme and may work as a scaffold for intratubular proteins, such as tektin and PACRG, to produce the beak structures in DMT1, 5 and 6. Not essential for flagellar assembly. This Chlamydomonas reinhardtii (Chlamydomonas smithii) protein is Cilia- and flagella-associated protein 20 (CFAP20).